Consider the following 196-residue polypeptide: ATP-dependent Clp protease proteolytic subunit (196 aa).

S101 (nucleophile) is an active-site residue. H126 is an active-site residue.

Belongs to the peptidase S14 family. In terms of assembly, component of the chloroplastic Clp protease core complex.

It localises to the plastid. Its subcellular location is the chloroplast stroma. It carries out the reaction Hydrolysis of proteins to small peptides in the presence of ATP and magnesium. alpha-casein is the usual test substrate. In the absence of ATP, only oligopeptides shorter than five residues are hydrolyzed (such as succinyl-Leu-Tyr-|-NHMec, and Leu-Tyr-Leu-|-Tyr-Trp, in which cleavage of the -Tyr-|-Leu- and -Tyr-|-Trp bonds also occurs).. Its function is as follows. Cleaves peptides in various proteins in a process that requires ATP hydrolysis. Has a chymotrypsin-like activity. Plays a major role in the degradation of misfolded proteins. The polypeptide is ATP-dependent Clp protease proteolytic subunit (Helianthus annuus (Common sunflower)).